The sequence spans 329 residues: 36 kDa antigen (329 aa).

Residues 11–31 (AILTGGGALLLGLIVLFYLAY) form a helical membrane-spanning segment.

This sequence belongs to the membrane fusion protein (MFP) (TC 8.A.1) family.

It localises to the membrane. This is 36 kDa antigen from Helicobacter pylori (strain J99 / ATCC 700824) (Campylobacter pylori J99).